We begin with the raw amino-acid sequence, 241 residues long: GLIPR1-like protein 1 (241 aa).

Positions 1 to 22 are cleaved as a signal peptide; that stretch reads MILRKKLSYLWTLGLCLVASKS. In terms of domain architecture, SCP spans 39–172; that stretch reads LRLHNEARTN…PDSALLVCNY (134 aa). A lipid anchor (GPI-anchor amidated serine) is attached at S220. Residues 221–241 constitute a propeptide, removed in mature form; sequence GTRQLIACNPLYLISVLLTIF.

Belongs to the CRISP family. As to quaternary structure, part of a oolemmal binding multimeric complex (IZUMO1 complex) composed at least of IZUMO1 and GLIPR1L1; the complex assemblage is influenced by the maturation status of the male germ cell. Interacts with IZUMO1. In terms of processing, N-glycosylated. N-glycosylation decreases during the transit in the caput. As to expression, highly expressed in testis, where it localizes to round and elongating spermatids and differentiated spermatozoa in the seminiferous tubules and epididymis (at protein level).

The protein localises to the cytoplasmic vesicle. It is found in the secretory vesicle. The protein resides in the acrosome. Its subcellular location is the cell membrane. It localises to the membrane raft. In terms of biological role, required for optimal fertilization at the stage of sperm-oocyte fusion, plays a role in optimizing acrosome function, the translocation of IZUMO1 during the acrosome reaction and the fertilization process. Component of epididymosomes, one type of membranous microvesicules which mediate the transfer of lipids and proteins to spermatozoa plasma membrane during epididymal maturation. Also a component of the CD9-positive microvesicules found in the cauda region. In Bos taurus (Bovine), this protein is GLIPR1-like protein 1.